Reading from the N-terminus, the 511-residue chain is Bifunctional purine biosynthesis protein PurH (511 aa).

One can recognise an MGS-like domain in the interval 1–145 (MKRRALVSVS…KNHQHVTVVV (145 aa)).

The protein belongs to the PurH family.

The enzyme catalyses (6R)-10-formyltetrahydrofolate + 5-amino-1-(5-phospho-beta-D-ribosyl)imidazole-4-carboxamide = 5-formamido-1-(5-phospho-D-ribosyl)imidazole-4-carboxamide + (6S)-5,6,7,8-tetrahydrofolate. It catalyses the reaction IMP + H2O = 5-formamido-1-(5-phospho-D-ribosyl)imidazole-4-carboxamide. It participates in purine metabolism; IMP biosynthesis via de novo pathway; 5-formamido-1-(5-phospho-D-ribosyl)imidazole-4-carboxamide from 5-amino-1-(5-phospho-D-ribosyl)imidazole-4-carboxamide (10-formyl THF route): step 1/1. It functions in the pathway purine metabolism; IMP biosynthesis via de novo pathway; IMP from 5-formamido-1-(5-phospho-D-ribosyl)imidazole-4-carboxamide: step 1/1. This chain is Bifunctional purine biosynthesis protein PurH, found in Halalkalibacterium halodurans (strain ATCC BAA-125 / DSM 18197 / FERM 7344 / JCM 9153 / C-125) (Bacillus halodurans).